Here is a 284-residue protein sequence, read N- to C-terminus: Probable endonuclease 4 (284 aa).

9 residues coordinate Zn(2+): H69, H109, E145, D179, H182, H216, D229, H231, and E261.

Belongs to the AP endonuclease 2 family. Requires Zn(2+) as cofactor.

The enzyme catalyses Endonucleolytic cleavage to 5'-phosphooligonucleotide end-products.. Functionally, endonuclease IV plays a role in DNA repair. It cleaves phosphodiester bonds at apurinic or apyrimidinic (AP) sites, generating a 3'-hydroxyl group and a 5'-terminal sugar phosphate. This chain is Probable endonuclease 4, found in Chlorobium phaeobacteroides (strain BS1).